Consider the following 80-residue polypeptide: Large ribosomal subunit protein uL24 (80 aa).

This sequence belongs to the universal ribosomal protein uL24 family. In terms of assembly, part of the 50S ribosomal subunit.

Functionally, one of two assembly initiator proteins, it binds directly to the 5'-end of the 23S rRNA, where it nucleates assembly of the 50S subunit. Its function is as follows. One of the proteins that surrounds the polypeptide exit tunnel on the outside of the subunit. This is Large ribosomal subunit protein uL24 from Chlorobium phaeovibrioides (strain DSM 265 / 1930) (Prosthecochloris vibrioformis (strain DSM 265)).